We begin with the raw amino-acid sequence, 478 residues long: Glycogen synthase (478 aa).

Lys-15 is an ADP-alpha-D-glucose binding site.

This sequence belongs to the glycosyltransferase 1 family. Bacterial/plant glycogen synthase subfamily.

The catalysed reaction is [(1-&gt;4)-alpha-D-glucosyl](n) + ADP-alpha-D-glucose = [(1-&gt;4)-alpha-D-glucosyl](n+1) + ADP + H(+). It functions in the pathway glycan biosynthesis; glycogen biosynthesis. In terms of biological role, synthesizes alpha-1,4-glucan chains using ADP-glucose. In Clostridium botulinum (strain Alaska E43 / Type E3), this protein is Glycogen synthase.